A 320-amino-acid chain; its full sequence is tRNA N6-adenosine threonylcarbamoyltransferase (320 aa).

Residues His-113 and His-117 each coordinate Fe cation. Substrate contacts are provided by residues 143-147, Asp-176, Gly-189, Asp-193, and Asn-281; that span reads VVSGG. Asp-305 lines the Fe cation pocket.

Belongs to the KAE1 / TsaD family. Requires Fe(2+) as cofactor.

It is found in the cytoplasm. The catalysed reaction is L-threonylcarbamoyladenylate + adenosine(37) in tRNA = N(6)-L-threonylcarbamoyladenosine(37) in tRNA + AMP + H(+). Functionally, required for the formation of a threonylcarbamoyl group on adenosine at position 37 (t(6)A37) in tRNAs that read codons beginning with adenine. Is involved in the transfer of the threonylcarbamoyl moiety of threonylcarbamoyl-AMP (TC-AMP) to the N6 group of A37, together with TsaE and TsaB. TsaD likely plays a direct catalytic role in this reaction. This chain is tRNA N6-adenosine threonylcarbamoyltransferase, found in Mycoplasmoides gallisepticum (strain R(low / passage 15 / clone 2)) (Mycoplasma gallisepticum).